Reading from the N-terminus, the 372-residue chain is Queuine tRNA-ribosyltransferase (372 aa).

D89 (proton acceptor) is an active-site residue. Substrate contacts are provided by residues 89 to 93 (DSGGF), D143, Q185, and G212. Residues 243-249 (GVGKPED) are RNA binding. D262 serves as the catalytic Nucleophile. The interval 267-271 (TRNAR) is RNA binding; important for wobble base 34 recognition. The Zn(2+) site is built by C300, C302, C305, and H331.

Belongs to the queuine tRNA-ribosyltransferase family. As to quaternary structure, homodimer. Within each dimer, one monomer is responsible for RNA recognition and catalysis, while the other monomer binds to the replacement base PreQ1. The cofactor is Zn(2+).

It catalyses the reaction 7-aminomethyl-7-carbaguanine + guanosine(34) in tRNA = 7-aminomethyl-7-carbaguanosine(34) in tRNA + guanine. The protein operates within tRNA modification; tRNA-queuosine biosynthesis. Functionally, catalyzes the base-exchange of a guanine (G) residue with the queuine precursor 7-aminomethyl-7-deazaguanine (PreQ1) at position 34 (anticodon wobble position) in tRNAs with GU(N) anticodons (tRNA-Asp, -Asn, -His and -Tyr). Catalysis occurs through a double-displacement mechanism. The nucleophile active site attacks the C1' of nucleotide 34 to detach the guanine base from the RNA, forming a covalent enzyme-RNA intermediate. The proton acceptor active site deprotonates the incoming PreQ1, allowing a nucleophilic attack on the C1' of the ribose to form the product. After dissociation, two additional enzymatic reactions on the tRNA convert PreQ1 to queuine (Q), resulting in the hypermodified nucleoside queuosine (7-(((4,5-cis-dihydroxy-2-cyclopenten-1-yl)amino)methyl)-7-deazaguanosine). This Chromohalobacter salexigens (strain ATCC BAA-138 / DSM 3043 / CIP 106854 / NCIMB 13768 / 1H11) protein is Queuine tRNA-ribosyltransferase.